The chain runs to 289 residues: ATP synthase gamma chain (289 aa).

This sequence belongs to the ATPase gamma chain family. In terms of assembly, F-type ATPases have 2 components, CF(1) - the catalytic core - and CF(0) - the membrane proton channel. CF(1) has five subunits: alpha(3), beta(3), gamma(1), delta(1), epsilon(1). CF(0) has three main subunits: a, b and c.

It localises to the cell inner membrane. Functionally, produces ATP from ADP in the presence of a proton gradient across the membrane. The gamma chain is believed to be important in regulating ATPase activity and the flow of protons through the CF(0) complex. The chain is ATP synthase gamma chain from Acinetobacter baylyi (strain ATCC 33305 / BD413 / ADP1).